The chain runs to 243 residues: Probable aquaporin SIP1-2 (243 aa).

2 helical membrane-spanning segments follow: residues 12–32 (VITFLWVILSATFGIQTAAIV) and 42–62 (WAPLVISTLVVFVSISIFTVI). An NPA 1 motif is present at residues 72 to 74 (NPC). 3 helical membrane-spanning segments follow: residues 90–110 (FSLAIRSPAQAIGAAGGAITI), 135–155 (GAISEVVLSFSVTFLVLLIIL), and 162–182 (LAKTFLLALATVSVFVVGSKF). An NPA 2 motif is present at residues 188–190 (NPA). A helical membrane pass occupies residues 210 to 230 (VYWISSYTGAILSAMLFRIIF).

It belongs to the MIP/aquaporin (TC 1.A.8) family. SIP (TC 1.A.8.10) subfamily. As to expression, expressed in roots and above ground. Expressed in elongating regions of the root tips, cotyledons, minor veins and hydathode cells of the rosette leaves. Weakly expressed in vascular tissues of the flower petals, filaments of stamens, upper part of the styles and receptacles of the siliques.

Its subcellular location is the endoplasmic reticulum membrane. Water channel required to facilitate the transport of water across cell membrane. The chain is Probable aquaporin SIP1-2 (SIP1-2) from Arabidopsis thaliana (Mouse-ear cress).